The sequence spans 128 residues: Large ribosomal subunit protein bL17 (128 aa).

This sequence belongs to the bacterial ribosomal protein bL17 family. In terms of assembly, part of the 50S ribosomal subunit. Contacts protein L32.

This is Large ribosomal subunit protein bL17 from Streptococcus pneumoniae serotype 4 (strain ATCC BAA-334 / TIGR4).